The sequence spans 401 residues: Dual specificity mitogen-activated protein kinase kinase 2 (401 aa).

M1 is modified (N-acetylmethionine). Phosphoserine is present on S23. The Protein kinase domain maps to 72 to 370; that stretch reads FERISELGAG…LKLLMNHAFI (299 aa). Residues 78–86 and K101 each bind ATP; that span reads LGAGNGGVV. Catalysis depends on D194, which acts as the Proton acceptor. Phosphoserine; by RAF occurs at positions 222 and 226. Residues 282–310 form a disordered region; sequence PVVDGADGEPHSVSPRPRPPGRPISVGHG. A phosphoserine mark is found at S293, S295, and S306. 2 positions are modified to phosphothreonine: T395 and T397.

The protein belongs to the protein kinase superfamily. STE Ser/Thr protein kinase family. MAP kinase kinase subfamily. In terms of assembly, interacts with MORG1. Interacts with SGK1. Interacts with KSR1. Interacts with KSR1 and BRAF; the interaction with KSR1 mediates KSR1-BRAF dimerization. Interacts with GLS. Mg(2+) serves as cofactor. Phosphorylation on Ser/Thr by MAP kinase kinase kinases (RAF or MEKK1) positively regulates the kinase activity. Phosphorylated by MAP2K1/MEK1. Low levels of autophosphorylation have been observed. In terms of tissue distribution, expressed in adult intestine, kidney, liver, lung, pancreas, spleen, thymus, and at high levels in the neonatal brain. Lower expression is found in adult brain and heart.

It is found in the cytoplasm. The protein resides in the membrane. It catalyses the reaction L-seryl-[protein] + ATP = O-phospho-L-seryl-[protein] + ADP + H(+). The catalysed reaction is L-threonyl-[protein] + ATP = O-phospho-L-threonyl-[protein] + ADP + H(+). The enzyme catalyses L-tyrosyl-[protein] + ATP = O-phospho-L-tyrosyl-[protein] + ADP + H(+). Inhibited by serine/threonine phosphatase 2A. Its function is as follows. Catalyzes the concomitant phosphorylation of a threonine and a tyrosine residue in a Thr-Glu-Tyr sequence located in MAP kinases. Activates the ERK1 and ERK2 MAP kinases. Activates BRAF in a KSR1 or KSR2-dependent manner; by binding to KSR1 or KSR2 releases the inhibitory intramolecular interaction between KSR1 or KSR2 protein kinase and N-terminal domains which promotes KSR1 or KSR2-BRAF dimerization and BRAF activation. The protein is Dual specificity mitogen-activated protein kinase kinase 2 (Map2k2) of Mus musculus (Mouse).